We begin with the raw amino-acid sequence, 454 residues long: Tyrosine aminotransferase (454 aa).

Methionine 1 carries the N-acetylmethionine modification. Lysine 280 bears the N6-(pyridoxal phosphate)lysine mark. Serine 448 is subject to Phosphoserine.

It belongs to the class-I pyridoxal-phosphate-dependent aminotransferase family. As to quaternary structure, homodimer. It depends on pyridoxal 5'-phosphate as a cofactor.

The catalysed reaction is L-tyrosine + 2-oxoglutarate = 3-(4-hydroxyphenyl)pyruvate + L-glutamate. The protein operates within amino-acid degradation; L-phenylalanine degradation; acetoacetate and fumarate from L-phenylalanine: step 2/6. In terms of biological role, transaminase involved in tyrosine breakdown. Converts tyrosine to p-hydroxyphenylpyruvate. Can catalyze the reverse reaction, using glutamic acid, with 2-oxoglutarate as cosubstrate (in vitro). Has much lower affinity and transaminase activity for phenylalanine. This is Tyrosine aminotransferase (Tat) from Mus musculus (Mouse).